A 156-amino-acid chain; its full sequence is ATP synthase subunit b (156 aa).

A helical transmembrane segment spans residues isoleucine 7–tryptophan 26.

The protein belongs to the ATPase B chain family. F-type ATPases have 2 components, F(1) - the catalytic core - and F(0) - the membrane proton channel. F(1) has five subunits: alpha(3), beta(3), gamma(1), delta(1), epsilon(1). F(0) has three main subunits: a(1), b(2) and c(10-14). The alpha and beta chains form an alternating ring which encloses part of the gamma chain. F(1) is attached to F(0) by a central stalk formed by the gamma and epsilon chains, while a peripheral stalk is formed by the delta and b chains.

The protein localises to the cell inner membrane. F(1)F(0) ATP synthase produces ATP from ADP in the presence of a proton or sodium gradient. F-type ATPases consist of two structural domains, F(1) containing the extramembraneous catalytic core and F(0) containing the membrane proton channel, linked together by a central stalk and a peripheral stalk. During catalysis, ATP synthesis in the catalytic domain of F(1) is coupled via a rotary mechanism of the central stalk subunits to proton translocation. Functionally, component of the F(0) channel, it forms part of the peripheral stalk, linking F(1) to F(0). In Pectobacterium atrosepticum (strain SCRI 1043 / ATCC BAA-672) (Erwinia carotovora subsp. atroseptica), this protein is ATP synthase subunit b.